Consider the following 400-residue polypeptide: Telomere repeat-binding protein 6 (400 aa).

Residues 173-252 (VKFGIKSLNI…DDENLGSLGF (80 aa)) form the Ubiquitin-like domain. Residues 310 to 369 (VQRRIRRPFTVSEVEALVQAVERLGTGRWRDVKSHAFNHVNHRTYVDLKDKWKTLVHTAK) form the HTH myb-type domain. The segment at residues 338–365 (WRDVKSHAFNHVNHRTYVDLKDKWKTLV) is a DNA-binding region (H-T-H motif).

In terms of assembly, homodimer. Expressed ubiquitously.

It localises to the nucleus. Binds specifically to the plant telomeric double-stranded DNA sequences. At least 4 repeats of telomeric sequences are required for binding. The protein is Telomere repeat-binding protein 6 (TRP6) of Arabidopsis thaliana (Mouse-ear cress).